An 821-amino-acid polypeptide reads, in one-letter code: Integrator complex assembly factor BRAT1 (821 aa).

Residues 100-200 (PGLFGEPGPL…WPACAQKIMD (101 aa)) form a required for interaction with NDFIP1 region. HEAT repeat units lie at residues 495 to 531 (PQFL…SRHW) and 544 to 576 (SEVP…SSQG). The interval 741 to 767 (GSPNTASAEATLPRWRAGEQAQPPGDQ) is disordered. Residue Ser-742 is modified to Phosphoserine. The BRAT1-like motif motif lies at 819 to 821 (DCY). Residue Cys-820 coordinates Zn(2+).

Belongs to the BRAT1 family. In terms of assembly, part of the multiprotein complex composed of BRAT1, WDR73, as well as integrator complex subunits INTS9 and INTS11. Interacts with BRCA1 and ATM. Interacts with MTOR and RPTOR. Interacts with NDFIP1. Interacts with SMC1A and PRKDC. Ubiquitinated by NEDD4, NEDD4L and ITCH; mono- and polyubiquitinated forms are detected. Ubiquitously expressed.

The protein localises to the nucleus. It is found in the cytoplasm. Functionally, component of a multiprotein complex required for the assembly of the RNA endonuclease module of the integrator complex. Associates with INTS9 and INTS11 in the cytoplasm and blocks the active site of INTS11 to inhibit the endonuclease activity of INTS11 before formation of the full integrator complex. Following dissociation of WDR73 of the complex, BRAT1 facilitates the nuclear import of the INTS9-INTS11 heterodimer. In the nucleus, INTS4 is integrated to the INTS9-INTS11 heterodimer and BRAT1 is released from the mature RNA endonuclease module by inositol hexakisphosphate (InsP6). BRAT1 is also involved in DNA damage response; activates kinases ATM, SMC1A and PRKDC by modulating their phosphorylation status following ionizing radiation (IR) stress. Plays a role in regulating mitochondrial function and cell proliferation. Required for protein stability of MTOR and MTOR-related proteins, and cell cycle progress by growth factors. This chain is Integrator complex assembly factor BRAT1, found in Homo sapiens (Human).